A 622-amino-acid polypeptide reads, in one-letter code: Protein lev-9 (622 aa).

Residues 1–16 form the signal peptide; that stretch reads MRFLLLLAISITYASA. A WAP; atypical domain is found at 17-61; sequence LSCPEVTLSQRPKHCKKECIADEDCKRNKRCMCDGECGLSCVNPI. Cystine bridges form between C19–C49, C35–C47, C41–C57, C64–C105, C91–C118, C124–C171, C154–C188, C193–C233, C219–C246, C251–C291, C277–C304, C309–C349, C335–C362, C366–C409, C395–C420, C425–C467, C452–C481, C486–C543, and C529–C556. Sushi domains are found at residues 62-120, 122-190, 191-248, 249-306, 307-364, 365-422, 423-483, and 484-558; these read AMCH…VCRL, LKCG…RCKA, RACP…NCKA, TECS…RCEE, IRCS…RCLA, SCRV…VCSP, LSCH…KCLP, and SWCE…KCVS. N-linked (GlcNAc...) asparagine glycosylation is present at N411. Residues 576 to 622 constitute a propeptide that is removed on maturation; sequence SLPGRAVREYVDDELSTHRQHSGKCGIVSGKLERMIMQHSDNGVSVC.

Proteolytic processing of the C-terminus is required for clustering activity but not for secretion nor traffic.

It is found in the synapse. Its subcellular location is the secreted. Scaffolding protein that is necessary to cluster acetylcholine receptors at neuromuscular junctions. This is Protein lev-9 (lev-9) from Caenorhabditis elegans.